A 1605-amino-acid polypeptide reads, in one-letter code: Zinc finger protein jing homolog (1605 aa).

The span at Met-1–Ser-15 shows a compositional bias: polar residues. 7 disordered regions span residues Met-1–Ser-28, Gln-60–Asn-117, Thr-359–Pro-388, Gln-441–Gln-468, Ser-856–Leu-877, Thr-917–Thr-947, and Asn-991–Leu-1213. Positions Asn-64–Asn-117 are enriched in low complexity. Residues Asn-991–Ser-1000 are compositionally biased toward polar residues. Residues Pro-1021–Gln-1030 show a composition bias toward basic and acidic residues. Pro residues predominate over residues Ser-1035 to Ile-1049. Acidic residues-rich tracts occupy residues Ser-1053–His-1090 and Ser-1099–Asp-1110. The segment covering Gln-1112–Thr-1126 has biased composition (pro residues). The segment covering Leu-1135–Leu-1149 has biased composition (low complexity). Polar residues predominate over residues Gln-1165–Val-1201. A C2H2-type 1 zinc finger spans residues Gly-1260 to His-1285. Residues Phe-1293–His-1320 form a C2H2-type 2; degenerate zinc finger. The segment at His-1326 to His-1350 adopts a C2H2-type 3 zinc-finger fold. 2 disordered regions span residues Asn-1352–Val-1371 and Cys-1511–Ser-1605. Composition is skewed to low complexity over residues Cys-1511–Ser-1537 and Lys-1556–Ser-1605.

This sequence belongs to the AEBP2/jing C2H2-type zinc-finger family.

It is found in the nucleus. In terms of biological role, may functionally interact with Polycomb group (PcG) and trithorax group (trxG) proteins to repress transcription. This Aedes aegypti (Yellowfever mosquito) protein is Zinc finger protein jing homolog.